The primary structure comprises 630 residues: MASHLFTRSRISLLKTLKPNPFTSASPIRAISGTPFLSQDPLLATESTDHDPSNHQSTSTPLPPNPATGSPLYQENWRSPIPNTPSFNQSLVPLGFLNQAPAPRIRALSETLDMNSLLNMFADWTASQRWSDMKQLFEVWVRSLDKNGKPNKPDVNLYNHYLRANLMMGASAGDMLDLVAPMEEFSVEPNTASYNLVLKAMYQARETEAAMKLLERMLLLGKDSLPDDESYDLVIGMHFGVGKNDEAMKVMDTALKSGYMLSTSVFTECVRSCVAKGRTDTLVSIIERCKAVDRNKSLCPSWILCNYIAEVAIQEDNSKLAFYAFEFMFKWITRGEMARPSVIFSVDEGLVVAGLASAARTCSSSLVEGSWTILKQSLRGRKAANPASYIAKINAYASLGNLQKAFTSLHELESAYADSEKEVVEEMLSPFTSLYPLVVACSKKGFETLDEVYFQLESLSQGDTPYKSVAALNCIILGCANTWDLDRAYQTFEAISASFGLTPNIDSYNALLYAFGKVKKTFEATNVFEHLVSIGVKPDSRTYSLLVDAHLINRDPKSALTVVDDMIKAGFEPSRETLKKLRRRCVREMDDENDDQVEALAKKFQIRMGSENRRNMLFNIDYSRGRALNN.

The transit peptide at M1–N115 directs the protein to the mitochondrion. The disordered stretch occupies residues L42–S79. Over residues A67–W77 the composition is skewed to polar residues. 6 PPR repeats span residues D154 to P189, N190 to S224, D227 to L261, S468 to P503, N504 to P538, and D539 to P573.

Belongs to the PPR family. P subfamily.

Its subcellular location is the mitochondrion. In Arabidopsis thaliana (Mouse-ear cress), this protein is Pentatricopeptide repeat-containing protein At1g26460, mitochondrial.